A 443-amino-acid chain; its full sequence is Threonine/serine transporter TdcC (443 aa).

11 helical membrane-spanning segments follow: residues 22–42 (TTWT…FFPI), 44–64 (AGFG…PIAF), 97–117 (GVVI…IYGV), 140–160 (FVAL…KDLM), 163–183 (VMSY…LSLI), 207–227 (ILVT…FSPI), 259–279 (ASML…FTLS), 319–339 (ASII…LGTL), 366–386 (ISMI…PNIL), 389–409 (IEAM…MYAI), and 423–443 (DNVF…YKLF).

Belongs to the amino acid/polyamine transporter 2 family. SdaC/TdcC subfamily.

The protein localises to the cell inner membrane. It catalyses the reaction L-threonine(in) + H(+)(in) = L-threonine(out) + H(+)(out). The catalysed reaction is L-serine(in) + H(+)(in) = L-serine(out) + H(+)(out). In terms of biological role, involved in the import of threonine and serine into the cell, with the concomitant import of a proton (symport system). The polypeptide is Threonine/serine transporter TdcC (Salmonella paratyphi B (strain ATCC BAA-1250 / SPB7)).